A 338-amino-acid polypeptide reads, in one-letter code: DNA-directed RNA polymerase subunit alpha (338 aa).

Residues 1 to 234 (MIERNWNELI…DQLQIFITFE (234 aa)) are alpha N-terminal domain (alpha-NTD). The segment at 250 to 338 (FNPALLKKVD…DLAKKFEDQI (89 aa)) is alpha C-terminal domain (alpha-CTD).

The protein belongs to the RNA polymerase alpha chain family. As to quaternary structure, homodimer. The RNAP catalytic core consists of 2 alpha, 1 beta, 1 beta' and 1 omega subunit. When a sigma factor is associated with the core the holoenzyme is formed, which can initiate transcription.

It carries out the reaction RNA(n) + a ribonucleoside 5'-triphosphate = RNA(n+1) + diphosphate. Functionally, DNA-dependent RNA polymerase catalyzes the transcription of DNA into RNA using the four ribonucleoside triphosphates as substrates. The polypeptide is DNA-directed RNA polymerase subunit alpha (Caulobacter sp. (strain K31)).